A 336-amino-acid polypeptide reads, in one-letter code: Lipoyl synthase (336 aa).

[4Fe-4S] cluster contacts are provided by Cys81, Cys86, Cys92, Cys107, Cys111, Cys114, and Ser323. The region spanning 93-312 (FGHGTATFMI…EDYGYELGFS (220 aa)) is the Radical SAM core domain.

It belongs to the radical SAM superfamily. Lipoyl synthase family. [4Fe-4S] cluster serves as cofactor.

Its subcellular location is the cytoplasm. The enzyme catalyses [[Fe-S] cluster scaffold protein carrying a second [4Fe-4S](2+) cluster] + N(6)-octanoyl-L-lysyl-[protein] + 2 oxidized [2Fe-2S]-[ferredoxin] + 2 S-adenosyl-L-methionine + 4 H(+) = [[Fe-S] cluster scaffold protein] + N(6)-[(R)-dihydrolipoyl]-L-lysyl-[protein] + 4 Fe(3+) + 2 hydrogen sulfide + 2 5'-deoxyadenosine + 2 L-methionine + 2 reduced [2Fe-2S]-[ferredoxin]. It participates in protein modification; protein lipoylation via endogenous pathway; protein N(6)-(lipoyl)lysine from octanoyl-[acyl-carrier-protein]: step 2/2. Functionally, catalyzes the radical-mediated insertion of two sulfur atoms into the C-6 and C-8 positions of the octanoyl moiety bound to the lipoyl domains of lipoate-dependent enzymes, thereby converting the octanoylated domains into lipoylated derivatives. This Stenotrophomonas maltophilia (strain R551-3) protein is Lipoyl synthase.